Consider the following 233-residue polypeptide: Biosynthetic peptidoglycan transglycosylase (233 aa).

A helical membrane pass occupies residues 8-28; that stretch reads LIALPVGIFIFFNAYVYGNII.

The protein belongs to the glycosyltransferase 51 family.

The protein resides in the cell inner membrane. The catalysed reaction is [GlcNAc-(1-&gt;4)-Mur2Ac(oyl-L-Ala-gamma-D-Glu-L-Lys-D-Ala-D-Ala)](n)-di-trans,octa-cis-undecaprenyl diphosphate + beta-D-GlcNAc-(1-&gt;4)-Mur2Ac(oyl-L-Ala-gamma-D-Glu-L-Lys-D-Ala-D-Ala)-di-trans,octa-cis-undecaprenyl diphosphate = [GlcNAc-(1-&gt;4)-Mur2Ac(oyl-L-Ala-gamma-D-Glu-L-Lys-D-Ala-D-Ala)](n+1)-di-trans,octa-cis-undecaprenyl diphosphate + di-trans,octa-cis-undecaprenyl diphosphate + H(+). The protein operates within cell wall biogenesis; peptidoglycan biosynthesis. In terms of biological role, peptidoglycan polymerase that catalyzes glycan chain elongation from lipid-linked precursors. This is Biosynthetic peptidoglycan transglycosylase from Neisseria gonorrhoeae (strain ATCC 700825 / FA 1090).